The sequence spans 91 residues: Small ribosomal subunit protein bS18 (91 aa).

The disordered stretch occupies residues 1 to 27; the sequence is MTQQSNTERKPRAKGPKRPRKPKVDPF. Residues 11–21 show a composition bias toward basic residues; it reads PRAKGPKRPRK.

The protein belongs to the bacterial ribosomal protein bS18 family. Part of the 30S ribosomal subunit. Forms a tight heterodimer with protein bS6.

In terms of biological role, binds as a heterodimer with protein bS6 to the central domain of the 16S rRNA, where it helps stabilize the platform of the 30S subunit. In Deinococcus geothermalis (strain DSM 11300 / CIP 105573 / AG-3a), this protein is Small ribosomal subunit protein bS18.